The sequence spans 190 residues: Frataxin homolog, mitochondrial (190 aa).

It belongs to the frataxin family. In terms of assembly, monomer (probable predominant form). Oligomer. Interacts with IscU. Component of the mitochondrial core iron-sulfur cluster (ISC) assembly complex at least composed of the cysteine desulfurase Nfs1, the scaffold protein IscU, the accessory protein bcn92/Isd11/Lyrm4, and probably fh/frataxin.

It localises to the mitochondrion. The enzyme catalyses 4 Fe(2+) + O2 + 4 H(+) = 4 Fe(3+) + 2 H2O. In terms of biological role, promotes the biosynthesis of heme as well as the assembly and repair of iron-sulfur clusters by delivering Fe(2+) to proteins involved in these pathways. May play a role in the protection against iron-catalyzed oxidative stress through its ability to catalyze the oxidation of Fe(2+) to Fe(3+). May be able to store large amounts of the metal in the form of a ferrihydrite mineral by oligomerization. Required for ecdysteroidogenesis in the prothoracic gland which is necessary for larval to pupal transition. This Drosophila melanogaster (Fruit fly) protein is Frataxin homolog, mitochondrial.